The primary structure comprises 620 residues: 1-deoxy-D-xylulose-5-phosphate synthase (620 aa).

Residues histidine 80 and glycine 121 to serine 123 each bind thiamine diphosphate. Position 152 (aspartate 152) interacts with Mg(2+). Thiamine diphosphate is bound by residues glycine 153 to alanine 154, asparagine 181, tyrosine 288, and glutamate 370. Position 181 (asparagine 181) interacts with Mg(2+).

This sequence belongs to the transketolase family. DXPS subfamily. In terms of assembly, homodimer. Mg(2+) is required as a cofactor. Thiamine diphosphate serves as cofactor.

It carries out the reaction D-glyceraldehyde 3-phosphate + pyruvate + H(+) = 1-deoxy-D-xylulose 5-phosphate + CO2. It functions in the pathway metabolic intermediate biosynthesis; 1-deoxy-D-xylulose 5-phosphate biosynthesis; 1-deoxy-D-xylulose 5-phosphate from D-glyceraldehyde 3-phosphate and pyruvate: step 1/1. Its function is as follows. Catalyzes the acyloin condensation reaction between C atoms 2 and 3 of pyruvate and glyceraldehyde 3-phosphate to yield 1-deoxy-D-xylulose-5-phosphate (DXP). This Shigella flexneri protein is 1-deoxy-D-xylulose-5-phosphate synthase.